A 348-amino-acid polypeptide reads, in one-letter code: Selenide, water dikinase (348 aa).

Cys-17 is a catalytic residue. ATP contacts are provided by residues Lys-20 and 47 to 49 (THD). Asp-50 is a binding site for Mg(2+). ATP is bound by residues Asp-67, Asp-90, and 138–140 (GHT). Asp-90 contributes to the Mg(2+) binding site. Asp-226 contacts Mg(2+).

It belongs to the selenophosphate synthase 1 family. Class I subfamily. In terms of assembly, homodimer. Mg(2+) is required as a cofactor.

The enzyme catalyses hydrogenselenide + ATP + H2O = selenophosphate + AMP + phosphate + 2 H(+). Functionally, synthesizes selenophosphate from selenide and ATP. In Porphyromonas gingivalis (strain ATCC BAA-308 / W83), this protein is Selenide, water dikinase.